Here is a 112-residue protein sequence, read N- to C-terminus: Protein BEX3 (112 aa).

Residues 1–45 form a disordered region; the sequence is MANIHQENEEMEQPVQNGEEDRPLGGGEGHQPERNHRRGQARRLA. The interaction with p75NTR/NGFR stretch occupies residues 69-94; that stretch reads EIFMEEMREIRRKLRELQLRNCLRIL. Residues 69–112 are interaction with 14-3-3 epsilon; the sequence is EIFMEEMREIRRKLRELQLRNCLRILMGELSNHHDHHDEFCLMP. The Nuclear export signal signature appears at 78 to 88; sequence IRRKLRELQLR. Residues 101–105 are his cluster; the sequence is HHDHH. Cys-109 lines the Zn(2+) pocket.

The protein belongs to the BEX family. In terms of assembly, self-associates. Binds to the DEATH domain of p75NTR/NGFR. Interacts with 14-3-3 epsilon (YWHAE). Interacts with DIABLO/SMAC. In terms of processing, ubiquitinated. Degraded by the proteasome.

It localises to the nucleus. It is found in the cytoplasm. The protein localises to the cytosol. Functionally, may be a signaling adapter molecule involved in NGFR/p75NTR-mediated apoptosis induced by NGF. Plays a role in zinc-triggered neuronal death. In absence of reductive stress, acts as a pseudosubstrate for the CRL2(FEM1B) complex: associates with FEM1B via zinc, thereby preventing association between FEM1B and its substrates. This Bos taurus (Bovine) protein is Protein BEX3.